We begin with the raw amino-acid sequence, 490 residues long: Betaine aldehyde dehydrogenase (490 aa).

Residues Ile27 and Asp93 each coordinate K(+). Position 150-152 (150-152) interacts with NAD(+); sequence GAW. Lys162 acts as the Charge relay system in catalysis. Residue 176-179 participates in NAD(+) binding; sequence KPSE. Val180 is a K(+) binding site. 230 to 233 is a binding site for NAD(+); sequence GTDT. Leu246 contributes to the K(+) binding site. Glu252 serves as the catalytic Proton acceptor. The NAD(+) site is built by Gly254, Cys286, and Glu387. Cys286 (nucleophile) is an active-site residue. Cys286 is subject to Cysteine sulfenic acid (-SOH). K(+) is bound by residues Lys457 and Gly460. Glu464 functions as the Charge relay system in the catalytic mechanism.

It belongs to the aldehyde dehydrogenase family. In terms of assembly, dimer of dimers. The cofactor is K(+).

The catalysed reaction is betaine aldehyde + NAD(+) + H2O = glycine betaine + NADH + 2 H(+). It participates in amine and polyamine biosynthesis; betaine biosynthesis via choline pathway; betaine from betaine aldehyde: step 1/1. Functionally, involved in the biosynthesis of the osmoprotectant glycine betaine. Catalyzes the irreversible oxidation of betaine aldehyde to the corresponding acid. This Pseudomonas fluorescens (strain SBW25) protein is Betaine aldehyde dehydrogenase.